Here is a 354-residue protein sequence, read N- to C-terminus: MQTYGNPDVTYGWWAGNSRVTNRAGKFIAAHAGHTGLISFAAGASTLWELARFDPSIAMGHQSSIFLAHLASIGIGFDDAGVWTGANVASVAIVHIIASLVYAGGALSHSLLFDGDLADGPGPTTQKFKLEWDNPDNLTFILGHHLIFFGVACIAFVEWARIHGIYDPAIGAVRQVEYNLNLTNIWNHQFDFLAIDNLEDVLGGHAFLAFVEITGGAFHIATKQVGEYTEFKGAGILSAEAVLSFSLAGIGWMAIVAAFWCATNTTVYPEPWFGEPLALKFGISPYWIDTVEVSESTALAGHTTRAALTNVHYYFGFFFLQGHLWHAIRALGFDFRRVTNAVAGLDRAQITLND.

Helical transmembrane passes span Phe27 to Leu47, Ile65 to Gly85, Val88 to Ser108, Val201 to Ala221, Ala241 to Cys261, and Leu308 to Ile328.

The protein belongs to the PsbB/PsbC family. IsiA/Pcb subfamily. As to quaternary structure, the antenna complex consists of divinyl chlorophylls (a and b) and divinyl chlorophyll a/b binding proteins and binds more divinyl chlorophyll b than does the antenna complex from high-light-adapted Prochlorococcus. Divinyl chlorophyll a serves as cofactor. It depends on divinyl chlorophyll b as a cofactor.

It is found in the cellular thylakoid membrane. Its function is as follows. The antenna complex functions as a light receptor, it captures and delivers excitation energy to photosystems II and I. The Prochlorales pcb genes are not related to higher plant LHCs. This chain is Divinyl chlorophyll a/b light-harvesting protein PcbG (pcbG), found in Prochlorococcus marinus (strain NATL2A).